The following is a 336-amino-acid chain: N-acetyl-gamma-glutamyl-phosphate reductase (336 aa).

C156 is an active-site residue.

It belongs to the NAGSA dehydrogenase family. Type 1 subfamily.

The protein localises to the cytoplasm. It catalyses the reaction N-acetyl-L-glutamate 5-semialdehyde + phosphate + NADP(+) = N-acetyl-L-glutamyl 5-phosphate + NADPH + H(+). The protein operates within amino-acid biosynthesis; L-arginine biosynthesis; N(2)-acetyl-L-ornithine from L-glutamate: step 3/4. Its function is as follows. Catalyzes the NADPH-dependent reduction of N-acetyl-5-glutamyl phosphate to yield N-acetyl-L-glutamate 5-semialdehyde. This is N-acetyl-gamma-glutamyl-phosphate reductase from Moritella abyssi.